Here is a 120-residue protein sequence, read N- to C-terminus: NAD(P)H-quinone oxidoreductase subunit 3, chloroplastic (120 aa).

3 consecutive transmembrane segments (helical) span residues 9 to 29 (IFWA…FISG), 64 to 84 (MFAL…PWAM), and 88 to 108 (VLGL…IVGL).

The protein belongs to the complex I subunit 3 family. In terms of assembly, NDH is composed of at least 16 different subunits, 5 of which are encoded in the nucleus.

The protein localises to the plastid. It localises to the chloroplast thylakoid membrane. It catalyses the reaction a plastoquinone + NADH + (n+1) H(+)(in) = a plastoquinol + NAD(+) + n H(+)(out). The catalysed reaction is a plastoquinone + NADPH + (n+1) H(+)(in) = a plastoquinol + NADP(+) + n H(+)(out). NDH shuttles electrons from NAD(P)H:plastoquinone, via FMN and iron-sulfur (Fe-S) centers, to quinones in the photosynthetic chain and possibly in a chloroplast respiratory chain. The immediate electron acceptor for the enzyme in this species is believed to be plastoquinone. Couples the redox reaction to proton translocation, and thus conserves the redox energy in a proton gradient. This is NAD(P)H-quinone oxidoreductase subunit 3, chloroplastic from Jasminum nudiflorum (Winter jasmine).